Here is a 115-residue protein sequence, read N- to C-terminus: MPRATNSVASRARRKRILKKAKGYWGSRGTILTVAKHAVDKAEQYAYRDRRVKKRTFRSLWIMRINAAARENGTSYSRLMEAMNKKSIDINRKALAEIAVKDPAAFSQIVKSAMG.

Belongs to the bacterial ribosomal protein bL20 family.

Functionally, binds directly to 23S ribosomal RNA and is necessary for the in vitro assembly process of the 50S ribosomal subunit. It is not involved in the protein synthesizing functions of that subunit. This Chlorobium phaeobacteroides (strain BS1) protein is Large ribosomal subunit protein bL20.